A 337-amino-acid polypeptide reads, in one-letter code: MTPTVHTWPILETARTQVLEQGIGLTEDQLVEVLQLPDEALPQALELAHQVRLRHCGEDVEVEGIVSIKTGGCPEDCHFCSQSGLFDSPVRGVWLDIPELVKAAKETAATGATEFCIVAAVRGPDIKLMNQVKFAIGRINEEVDINIACSLGMLTQQQVDQLAGWGVHRYNHNLETARSFFPQVVTTHTYEERLETCAMVKAAGMELCCGALLGMGESLHQRAELAAQLAALEPHEVPLNFLNPRPGTPLENQGLMDGKDALRAIAAFRLAMPRTVLRYAGGRELTLGDLGTREGLLGGINAVIVGNYLTTLGRPATADLSLLVDLNMPIRELQKTL.

A Radical SAM core domain is found at 58-283 (EDVEVEGIVS…RTVLRYAGGR (226 aa)). Positions 73, 77, and 80 each coordinate [4Fe-4S] cluster. [2Fe-2S] cluster contacts are provided by cysteine 116, cysteine 149, cysteine 208, and arginine 278.

The protein belongs to the radical SAM superfamily. Biotin synthase family. Homodimer. Requires [4Fe-4S] cluster as cofactor. The cofactor is [2Fe-2S] cluster.

The enzyme catalyses (4R,5S)-dethiobiotin + (sulfur carrier)-SH + 2 reduced [2Fe-2S]-[ferredoxin] + 2 S-adenosyl-L-methionine = (sulfur carrier)-H + biotin + 2 5'-deoxyadenosine + 2 L-methionine + 2 oxidized [2Fe-2S]-[ferredoxin]. It functions in the pathway cofactor biosynthesis; biotin biosynthesis; biotin from 7,8-diaminononanoate: step 2/2. Functionally, catalyzes the conversion of dethiobiotin (DTB) to biotin by the insertion of a sulfur atom into dethiobiotin via a radical-based mechanism. The chain is Biotin synthase from Pseudarthrobacter chlorophenolicus (strain ATCC 700700 / DSM 12829 / CIP 107037 / JCM 12360 / KCTC 9906 / NCIMB 13794 / A6) (Arthrobacter chlorophenolicus).